The chain runs to 360 residues: DNA replication and repair protein RecF (360 aa).

Residue 30 to 37 (GHNGSGKT) participates in ATP binding.

Belongs to the RecF family.

It is found in the cytoplasm. Functionally, the RecF protein is involved in DNA metabolism; it is required for DNA replication and normal SOS inducibility. RecF binds preferentially to single-stranded, linear DNA. It also seems to bind ATP. This Actinobacillus pleuropneumoniae serotype 7 (strain AP76) protein is DNA replication and repair protein RecF.